The chain runs to 64 residues: Large ribosomal subunit protein eL37 (64 aa).

Residues cysteine 20, cysteine 23, cysteine 35, and cysteine 38 each contribute to the Zn(2+) site. A C4-type zinc finger spans residues cysteine 20–cysteine 38.

This sequence belongs to the eukaryotic ribosomal protein eL37 family. The cofactor is Zn(2+).

In terms of biological role, binds to the 23S rRNA. The protein is Large ribosomal subunit protein eL37 of Methanococcus vannielii (strain ATCC 35089 / DSM 1224 / JCM 13029 / OCM 148 / SB).